The chain runs to 297 residues: Palmitoyl-protein thioesterase ABHD10, mitochondrial (297 aa).

The N-terminal 43 residues, 1–43, are a transit peptide targeting the mitochondrion; the sequence is MAAWVPCRKWGWAAVSFGRHRGLIASLARKPPWAWWLSACRQK. Residues 69–181 form the AB hydrolase-1 domain; sequence IIFIPGYLSN…GVVTQFHSLP (113 aa). Catalysis depends on charge relay system residues Ser-143, Asp-240, and His-270.

Belongs to the AB hydrolase superfamily. In terms of tissue distribution, expressed in epididymal sperm but not in testicular sperm (at protein level).

It localises to the mitochondrion. It catalyses the reaction S-hexadecanoyl-L-cysteinyl-[protein] + H2O = L-cysteinyl-[protein] + hexadecanoate + H(+). The catalysed reaction is mycophenolic acid O-acyl-beta-D-glucuronide + H2O = mycophenolate + D-glucuronate + H(+). With respect to regulation, inhibited by palmostatin-B. Its function is as follows. Acts as an acyl-protein thioesterase that hydrolyzes fatty acids from acylated residues in proteins. Regulates the mitochondrial S-depalmitoylation of the nucleophilic active site residue of peroxiredoxin-5/PRDX5, a key antioxidant protein, therefore modulating mitochondrial antioxidant ability. Also catalyzes the deglucuronidation of mycophenolic acid acyl-glucuronide, an active metabolite of the immunosuppressant drug mycophenolate. The chain is Palmitoyl-protein thioesterase ABHD10, mitochondrial from Rattus norvegicus (Rat).